The following is a 578-amino-acid chain: Cyclin-SDS (578 aa).

Residues 1-31 (MKEIAMRNSKRKPEPTPFAGKKLRSTRLRRK) are disordered. The span at 21 to 31 (KKLRSTRLRRK) shows a compositional bias: basic residues.

This sequence belongs to the cyclin family. May interact with CDKA-1 and CDKB1-1.

Meiosis-specific cyclin. Required for normal homolog synapsis and recombination in early to mid-prophase 1. May regulate the timing of sister chromatid separation. The polypeptide is Cyclin-SDS (SDS) (Arabidopsis thaliana (Mouse-ear cress)).